Reading from the N-terminus, the 218-residue chain is Ribonuclease HII (218 aa).

Residues 12–206 (GRVAGVDEVG…VREALARSAL (195 aa)) form the RNase H type-2 domain. 3 residues coordinate a divalent metal cation: aspartate 18, glutamate 19, and aspartate 115.

The protein belongs to the RNase HII family. Mn(2+) is required as a cofactor. The cofactor is Mg(2+).

The protein localises to the cytoplasm. The enzyme catalyses Endonucleolytic cleavage to 5'-phosphomonoester.. Endonuclease that specifically degrades the RNA of RNA-DNA hybrids. This Rhodospirillum rubrum (strain ATCC 11170 / ATH 1.1.1 / DSM 467 / LMG 4362 / NCIMB 8255 / S1) protein is Ribonuclease HII.